Here is a 77-residue protein sequence, read N- to C-terminus: MSWYEKYNIVLNPPKRCSSTCSDNLTTILSEDGTNIIRAILYSQPKKLKILQDFLTTSRNKMFLYKILDDEIRRVLT.

The protein belongs to the orthopoxvirus OPG128 family. As to quaternary structure, interacts with sulfhydryl oxidase OPG072; this interaction involves formation of a transient disulfide-bonded intermediate, allowing disulfide bond transfer. Interacts with OPG088; this interaction involves formation of a transient disulfide-bonded intermediate, allowing disulfide bond transfer.

Functionally, late protein which probably participates in disulfide bond formation by functioning as a thiol-disulfide transfer protein between membrane-associated OPG072 and OPG08. The complete pathway for formation of disulfide bonds in intracellular virion membrane proteins sequentially involves oxidation of OPG072, OPG128 and OPG08. The polypeptide is Protein OPG128 (OPG128) (Monkeypox virus).